A 441-amino-acid chain; its full sequence is Queuine tRNA-ribosyltransferase accessory subunit 2 (441 aa).

Zn(2+) contacts are provided by cysteine 307, cysteine 309, cysteine 312, and histidine 338.

Belongs to the queuine tRNA-ribosyltransferase family. QTRT2 subfamily. Heterodimer of a catalytic subunit and an accessory subunit. The cofactor is Zn(2+).

Its subcellular location is the cytoplasm. Non-catalytic subunit of the queuine tRNA-ribosyltransferase (TGT) that catalyzes the base-exchange of a guanine (G) residue with queuine (Q) at position 34 (anticodon wobble position) in tRNAs with GU(N) anticodons (tRNA-Asp, -Asn, -His and -Tyr), resulting in the hypermodified nucleoside queuosine (7-(((4,5-cis-dihydroxy-2-cyclopenten-1-yl)amino)methyl)-7-deazaguanosine). The polypeptide is Queuine tRNA-ribosyltransferase accessory subunit 2 (qtr2) (Schizosaccharomyces pombe (strain 972 / ATCC 24843) (Fission yeast)).